The sequence spans 123 residues: Small ribosomal subunit protein uS13 (123 aa).

The interval 96-123 (GLPVRGQRTKTNARTRKGPKKTVAGKKK) is disordered.

This sequence belongs to the universal ribosomal protein uS13 family. Part of the 30S ribosomal subunit. Forms a loose heterodimer with protein S19. Forms two bridges to the 50S subunit in the 70S ribosome.

Its function is as follows. Located at the top of the head of the 30S subunit, it contacts several helices of the 16S rRNA. In the 70S ribosome it contacts the 23S rRNA (bridge B1a) and protein L5 of the 50S subunit (bridge B1b), connecting the 2 subunits; these bridges are implicated in subunit movement. Contacts the tRNAs in the A and P-sites. The protein is Small ribosomal subunit protein uS13 of Nocardia farcinica (strain IFM 10152).